The following is a 66-amino-acid chain: Clusterin (66 aa).

It belongs to the clusterin family. In terms of assembly, antiparallel disulfide-linked heterodimer of an alpha chain and a beta chain. Self-associates and forms higher oligomers. Interacts with a broad range of misfolded proteins, including APP, APOC2 and LYZ. Slightly acidic pH promotes interaction with misfolded proteins. Forms high-molecular weight oligomers upon interaction with misfolded proteins. Interacts with APOA1, LRP2, CLUAP1 and PON1. Interacts with the complement membrane attack complex. Interacts (via alpha chain) with XRCC6. Interacts with SYVN1, COMMD1, BTRC, CUL1 and with ubiquitin and SCF (SKP1-CUL1-F-box protein) E3 ubiquitin-protein ligase complexes. Interacts (via alpha chain) with BAX in stressed cells, where BAX undergoes a conformation change leading to association with the mitochondrial membrane. Does not interact with BAX in unstressed cells. Found in a complex with LTF, CLU, EPPIN and SEMG1. Interacts (immaturely glycosylated pre-secreted form) with HSPA5; this interaction promotes CLU stability and facilitates stress-induced CLU retrotranslocation from the secretory pathway to the mitochondria, thereby reducing stress-induced apoptosis by stabilizing mitochondrial membrane integrity. Interacts with BCL2L1; this interaction releases and activates BAX and promotes cell death. Interacts with TGFBR2 and ACVR1. Interacts (secreted form) with STMN3; this interaction may act as an important modulator during neuronal differentiation. Component of a epididymal complex at least composed of soluble form of prion protein PRNP, CLU, BPI, CES5A, MANBA and GLB1. In terms of processing, proteolytically cleaved on its way through the secretory system, probably within the Golgi lumen. Proteolytic cleavage is not necessary for its chaperone activity. All non-secreted forms are not proteolytically cleaved. Chaperone activity of uncleaved forms is dependent on a non-reducing environment. Post-translationally, polyubiquitinated, leading to proteasomal degradation. Under cellular stress, the intracellular level of cleaved form is reduced due to proteasomal degradation. Heavily N-glycosylated. About 30% of the protein mass is comprised of complex N-linked carbohydrate. Endoplasmic reticulum (ER) stress induces changes in glycosylation status and increases level of hypoglycosylated forms. Core carbohydrates are essential for chaperone activity. Non-secreted forms are hypoglycosylated or unglycosylated.

The protein resides in the secreted. The protein localises to the nucleus. It is found in the cytoplasm. Its subcellular location is the mitochondrion membrane. It localises to the cytosol. The protein resides in the microsome. The protein localises to the endoplasmic reticulum. It is found in the mitochondrion. Its subcellular location is the perinuclear region. It localises to the cytoplasmic vesicle. The protein resides in the secretory vesicle. The protein localises to the chromaffin granule. In terms of biological role, functions as extracellular chaperone that prevents aggregation of non native proteins. Prevents stress-induced aggregation of blood plasma proteins. Inhibits formation of amyloid fibrils by APP, APOC2, B2M, CALCA, CSN3, SNCA and aggregation-prone LYZ variants (in vitro). Does not require ATP. Maintains partially unfolded proteins in a state appropriate for subsequent refolding by other chaperones, such as HSPA8/HSC70. Does not refold proteins by itself. Binding to cell surface receptors triggers internalization of the chaperone-client complex and subsequent lysosomal or proteasomal degradation. When secreted, protects cells against apoptosis and against cytolysis by complement: inhibits assembly of the complement membrane attack complex (MAC) by preventing polymerization of C9 pore component of the MAC complex. Intracellular forms interact with ubiquitin and SCF (SKP1-CUL1-F-box protein) E3 ubiquitin-protein ligase complexes and promote the ubiquitination and subsequent proteasomal degradation of target proteins. Promotes proteasomal degradation of COMMD1 and IKBKB. Modulates NF-kappa-B transcriptional activity. Following stress, promotes apoptosis. Inhibits apoptosis when associated with the mitochondrial membrane by interference with BAX-dependent release of cytochrome c into the cytoplasm. Plays a role in the regulation of cell proliferation. An intracellular form suppresses stress-induced apoptosis by stabilizing mitochondrial membrane integrity through interaction with HSPA5. Secreted form does not affect caspase or BAX-mediated intrinsic apoptosis and TNF-induced NF-kappa-B-activity. Secreted form act as an important modulator during neuronal differentiation through interaction with STMN3. Plays a role in the clearance of immune complexes that arise during cell injury. The polypeptide is Clusterin (CLU) (Ovis aries (Sheep)).